The following is an 82-amino-acid chain: MTDTNQNSSRRPFHRRRKTCPFSGATAPKIDYKDIKLLQRYISERGKIVPSRITAVSQKKQRELANAIKRARFLGLLPYVIK.

The segment covering 1-10 (MTDTNQNSSR) has biased composition (polar residues). Positions 1 to 21 (MTDTNQNSSRRPFHRRRKTCP) are disordered.

It belongs to the bacterial ribosomal protein bS18 family. Part of the 30S ribosomal subunit. Forms a tight heterodimer with protein bS6.

In terms of biological role, binds as a heterodimer with protein bS6 to the central domain of the 16S rRNA, where it helps stabilize the platform of the 30S subunit. The chain is Small ribosomal subunit protein bS18 from Bartonella tribocorum (strain CIP 105476 / IBS 506).